The primary structure comprises 292 residues: Small ribosomal subunit biogenesis GTPase RsgA (292 aa).

One can recognise a CP-type G domain in the interval 64-221; sequence RSELFRPAVA…LVDTPGFSSL (158 aa). GTP-binding positions include 113 to 116 and 164 to 172; these read NKMD and GPSGVGKST. Residues C245, C250, H252, and C258 each contribute to the Zn(2+) site.

Belongs to the TRAFAC class YlqF/YawG GTPase family. RsgA subfamily. As to quaternary structure, monomer. Associates with 30S ribosomal subunit, binds 16S rRNA. Requires Zn(2+) as cofactor.

Its subcellular location is the cytoplasm. Functionally, one of several proteins that assist in the late maturation steps of the functional core of the 30S ribosomal subunit. Helps release RbfA from mature subunits. May play a role in the assembly of ribosomal proteins into the subunit. Circularly permuted GTPase that catalyzes slow GTP hydrolysis, GTPase activity is stimulated by the 30S ribosomal subunit. The polypeptide is Small ribosomal subunit biogenesis GTPase RsgA (Clostridium botulinum (strain ATCC 19397 / Type A)).